The chain runs to 364 residues: DNA replication and repair protein RecF (364 aa).

30 to 37 contacts ATP; it reads GRNAQGKT.

This sequence belongs to the RecF family.

The protein localises to the cytoplasm. Its function is as follows. The RecF protein is involved in DNA metabolism; it is required for DNA replication and normal SOS inducibility. RecF binds preferentially to single-stranded, linear DNA. It also seems to bind ATP. The sequence is that of DNA replication and repair protein RecF from Pelotomaculum thermopropionicum (strain DSM 13744 / JCM 10971 / SI).